We begin with the raw amino-acid sequence, 188 residues long: Hypoxanthine/guanine phosphoribosyltransferase (188 aa).

This sequence belongs to the purine/pyrimidine phosphoribosyltransferase family. Archaeal HPRT subfamily. Homodimer.

The protein resides in the cytoplasm. The catalysed reaction is IMP + diphosphate = hypoxanthine + 5-phospho-alpha-D-ribose 1-diphosphate. The enzyme catalyses GMP + diphosphate = guanine + 5-phospho-alpha-D-ribose 1-diphosphate. It participates in purine metabolism; IMP biosynthesis via salvage pathway; IMP from hypoxanthine: step 1/1. Its function is as follows. Catalyzes a salvage reaction resulting in the formation of IMP that is energically less costly than de novo synthesis. This Methanobrevibacter ruminantium (strain ATCC 35063 / DSM 1093 / JCM 13430 / OCM 146 / M1) (Methanobacterium ruminantium) protein is Hypoxanthine/guanine phosphoribosyltransferase.